Consider the following 647-residue polypeptide: Leishmanolysin-like peptidase (647 aa).

His264 serves as a coordination point for Zn(2+). The active site involves Glu265. 2 residues coordinate Zn(2+): His268 and His370.

This sequence belongs to the peptidase M8 family. Zn(2+) serves as cofactor. In terms of tissue distribution, expressed in all cell lines analyzed.

The protein localises to the cytoplasm. It localises to the lipid droplet. Metalloprotease. The chain is Leishmanolysin-like peptidase (LMLN) from Homo sapiens (Human).